The following is a 136-amino-acid chain: Antistasin (136 aa).

A signal peptide spans 1–17; sequence MIKLAILLLFTVAIVRC. Q18 is modified (pyrrolidone carboxylic acid). 10 disulfides stabilise this stretch: C25–C36, C30–C43, C45–C65, C50–C68, C54–C70, C79–C90, C84–C97, C99–C120, C105–C123, and C109–C125. In terms of domain architecture, Antistasin-like 1 spans 45–70; it reads CSGVRCRMHCPHGFQRSRYGCEFCKC. The Antistasin-like 2 domain occupies 100–125; the sequence is KIDINCRKTCPNGLKRDKLGCEYCEC. Heparin contacts are provided by residues 114-117 and 128-135; these read KRDK and KRKLIPRL.

Belongs to the protease inhibitor I15 (antistasin) family.

It is found in the secreted. Functionally, this highly disulfide-bonded protein is a potent inhibitor of factor Xa. May have therapeutic utility as an anticoagulant. Also exhibits a strong metastatic activity. The chain is Antistasin from Haementeria officinalis (Mexican leech).